The primary structure comprises 338 residues: Ketol-acid reductoisomerase (NADP(+)) (338 aa).

A KARI N-terminal Rossmann domain is found at 1-181 (MKVYYDKDCD…GGGRTGIIET (181 aa)). NADP(+)-binding positions include 24–27 (YGSQ), Arg47, Ser50, Ser52, and 82–85 (DEFQ). The active site involves His107. Residue Gly133 participates in NADP(+) binding. In terms of domain architecture, KARI C-terminal knotted spans 182–327 (TFKDETETDL…EKLRTMMPWI (146 aa)). Residues Asp190, Glu194, Glu226, and Glu230 each contribute to the Mg(2+) site. Ser251 contacts substrate.

It belongs to the ketol-acid reductoisomerase family. Mg(2+) serves as cofactor.

It catalyses the reaction (2R)-2,3-dihydroxy-3-methylbutanoate + NADP(+) = (2S)-2-acetolactate + NADPH + H(+). The enzyme catalyses (2R,3R)-2,3-dihydroxy-3-methylpentanoate + NADP(+) = (S)-2-ethyl-2-hydroxy-3-oxobutanoate + NADPH + H(+). The protein operates within amino-acid biosynthesis; L-isoleucine biosynthesis; L-isoleucine from 2-oxobutanoate: step 2/4. It participates in amino-acid biosynthesis; L-valine biosynthesis; L-valine from pyruvate: step 2/4. Involved in the biosynthesis of branched-chain amino acids (BCAA). Catalyzes an alkyl-migration followed by a ketol-acid reduction of (S)-2-acetolactate (S2AL) to yield (R)-2,3-dihydroxy-isovalerate. In the isomerase reaction, S2AL is rearranged via a Mg-dependent methyl migration to produce 3-hydroxy-3-methyl-2-ketobutyrate (HMKB). In the reductase reaction, this 2-ketoacid undergoes a metal-dependent reduction by NADPH to yield (R)-2,3-dihydroxy-isovalerate. This chain is Ketol-acid reductoisomerase (NADP(+)), found in Azotobacter vinelandii (strain DJ / ATCC BAA-1303).